The primary structure comprises 197 residues: Probable nicotinate-nucleotide adenylyltransferase (197 aa).

The protein belongs to the NadD family.

The catalysed reaction is nicotinate beta-D-ribonucleotide + ATP + H(+) = deamido-NAD(+) + diphosphate. It participates in cofactor biosynthesis; NAD(+) biosynthesis; deamido-NAD(+) from nicotinate D-ribonucleotide: step 1/1. Catalyzes the reversible adenylation of nicotinate mononucleotide (NaMN) to nicotinic acid adenine dinucleotide (NaAD). In Neisseria meningitidis serogroup C (strain 053442), this protein is Probable nicotinate-nucleotide adenylyltransferase.